We begin with the raw amino-acid sequence, 231 residues long: DNA damage response protein C (231 aa).

In terms of assembly, homodimer.

It localises to the cytoplasm. The protein resides in the nucleoid. Appears to contribute to D.radiodurans capacity to survive exposure to ionizing radiation. Likely functions as a DNA damage-induced nucleoid-associated protein (NAP) that contributes to the enhanced level of nucleoid compaction after irradiation by bridging DNA duplexes, thereby limiting the dispersion of the fragmented genome immediately after irradiation to facilitate subsequent DNA repair. In vitro, binds both ssDNA and dsDNA, and is able to compact circular DNA, circularize linear DNA, anneal complementary DNA strands and protect DNA from nucleases. The sequence is that of DNA damage response protein C from Deinococcus radiodurans (strain ATCC 13939 / DSM 20539 / JCM 16871 / CCUG 27074 / LMG 4051 / NBRC 15346 / NCIMB 9279 / VKM B-1422 / R1).